Reading from the N-terminus, the 222-residue chain is Ribonuclease 3 (222 aa).

One can recognise an RNase III domain in the interval 3 to 125 (SQSVAKKLNH…LFGAIYLDAG (123 aa)). E38 lines the Mg(2+) pocket. D42 is a catalytic residue. D111 and E114 together coordinate Mg(2+). The active site involves E114. A DRBM domain is found at 152 to 222 (DAKTRLQEWL…AEKALKELLA (71 aa)).

This sequence belongs to the ribonuclease III family. Homodimer. Mg(2+) is required as a cofactor.

Its subcellular location is the cytoplasm. The enzyme catalyses Endonucleolytic cleavage to 5'-phosphomonoester.. Functionally, digests double-stranded RNA. Involved in the processing of primary rRNA transcript to yield the immediate precursors to the large and small rRNAs (23S and 16S). Processes some mRNAs, and tRNAs when they are encoded in the rRNA operon. Processes pre-crRNA and tracrRNA of type II CRISPR loci if present in the organism. The polypeptide is Ribonuclease 3 (Dechloromonas aromatica (strain RCB)).